A 186-amino-acid chain; its full sequence is Guanylate kinase (186 aa).

Residues 5-183 (GNLTVLTGPS…AFKEIEGFMG (179 aa)) form the Guanylate kinase-like domain. 12 to 19 (GPSGVGKG) contributes to the ATP binding site.

Belongs to the guanylate kinase family.

The protein resides in the cytoplasm. The enzyme catalyses GMP + ATP = GDP + ADP. In terms of biological role, essential for recycling GMP and indirectly, cGMP. The protein is Guanylate kinase of Prochlorococcus marinus (strain NATL2A).